Consider the following 381-residue polypeptide: Beta-1,4-galactosyltransferase 5 (381 aa).

The Cytoplasmic portion of the chain corresponds to 1 to 11; it reads MPTHLRFRRRS. Residues 12–32 form a helical; Signal-anchor for type II membrane protein membrane-spanning segment; it reads FLGLLFLFSLSTSALYFIYSA. The Lumenal segment spans residues 33–381; that stretch reads PGIVNEYLFM…SRDLAPVADY (349 aa). N-linked (GlcNAc...) asparagine glycans are attached at residues asparagine 73, asparagine 82, and asparagine 120. The cysteines at positions 106 and 151 are disulfide-linked. UDP-alpha-D-galactose is bound by residues 162–166, 201–203, 228–229, tyrosine 257, and tryptophan 289; these read PFRNR, FNR, and VD. A disulfide bridge connects residues cysteine 222 and cysteine 241. A Mn(2+)-binding site is contributed by aspartate 229. 291–294 contacts N-acetyl-D-glucosamine; it reads GEDD. Histidine 322 contributes to the Mn(2+) binding site. UDP-alpha-D-galactose is bound at residue 322–323; that stretch reads HH. Arginine 333 provides a ligand contact to N-acetyl-D-glucosamine. Asparagine 366 carries an N-linked (GlcNAc...) asparagine glycan.

This sequence belongs to the glycosyltransferase 7 family. Mn(2+) serves as cofactor.

It localises to the golgi apparatus. The protein resides in the golgi stack membrane. The enzyme catalyses a beta-D-glucosyl-(1&lt;-&gt;1')-N-acylsphing-4-enine + UDP-alpha-D-galactose = a beta-D-Gal-(1-&gt;4)-beta-D-Glc-(1&lt;-&gt;1)-Cer(d18:1(4E)) + UDP + H(+). The protein operates within protein modification; protein glycosylation. It functions in the pathway sphingolipid metabolism. In terms of biological role, catalyzes the synthesis of lactosylceramide (LacCer) via the transfer of galactose from UDP-galactose to glucosylceramide (GlcCer). Required for proper patterning of the dorsoventral axis during embryogenesis through the regulation of BMP signaling. Plays a role in proteoglycan glycosylation that is required for BMP-dependent specification of the dorsoventral axis. This is Beta-1,4-galactosyltransferase 5 (b4galt5) from Danio rerio (Zebrafish).